The sequence spans 259 residues: Keratinocyte-associated transmembrane protein 2 (259 aa).

An N-terminal signal peptide occupies residues 1–44; it reads MAASALGRMCGAAREKLSPGPGARGLGALARSLVLALLLVPVLC. Residues 45 to 190 lie on the Extracellular side of the membrane; that stretch reads SDRSENPPNN…VKLPPPNRED (146 aa). Residues 47–155 are disordered; that stretch reads RSENPPNNAT…YDWTTNPRDE (109 aa). Residues 50-81 show a composition bias toward polar residues; it reads NPPNNATVSSPVVVTAPGNHTSPSVSQISTTL. Residues N54 and N68 are each glycosylated (N-linked (GlcNAc...) asparagine). Low complexity predominate over residues 82-104; that stretch reads SPASAEKSGSSSAAPTPTAAPSA. Over residues 105–122 the composition is skewed to acidic residues; it reads PEEEADSNEDPSMEEEDL. S165 carries the post-translational modification Phosphoserine. A helical membrane pass occupies residues 191-211; that stretch reads SHFFFHLLIFAFCAAVVYVTY. The Cytoplasmic segment spans residues 212 to 259; that stretch reads HNKRKIFLLVQSRKWRDGLCSKTVEYHRLDQNVNEAMPSLKITNDYIF. S223 and S250 each carry phosphoserine.

It is found in the membrane. The protein is Keratinocyte-associated transmembrane protein 2 (Kct2) of Mus musculus (Mouse).